The sequence spans 151 residues: Ubiquitin-conjugating enzyme E2 N (151 aa).

The UBC core domain occupies 3 to 149 (SLPRRIIKET…AREWTQKYAV (147 aa)). The Glycyl thioester intermediate role is filled by Cys87.

It belongs to the ubiquitin-conjugating enzyme family.

The enzyme catalyses S-ubiquitinyl-[E1 ubiquitin-activating enzyme]-L-cysteine + [E2 ubiquitin-conjugating enzyme]-L-cysteine = [E1 ubiquitin-activating enzyme]-L-cysteine + S-ubiquitinyl-[E2 ubiquitin-conjugating enzyme]-L-cysteine.. Its pathway is protein modification; protein ubiquitination. Functionally, catalyzes the covalent attachment of ubiquitin to other proteins. The polypeptide is Ubiquitin-conjugating enzyme E2 N (ben) (Drosophila melanogaster (Fruit fly)).